We begin with the raw amino-acid sequence, 194 residues long: Imidazoleglycerol-phosphate dehydratase (194 aa).

Belongs to the imidazoleglycerol-phosphate dehydratase family.

The protein resides in the cytoplasm. The enzyme catalyses D-erythro-1-(imidazol-4-yl)glycerol 3-phosphate = 3-(imidazol-4-yl)-2-oxopropyl phosphate + H2O. It functions in the pathway amino-acid biosynthesis; L-histidine biosynthesis; L-histidine from 5-phospho-alpha-D-ribose 1-diphosphate: step 6/9. The protein is Imidazoleglycerol-phosphate dehydratase of Bacillus velezensis (strain DSM 23117 / BGSC 10A6 / LMG 26770 / FZB42) (Bacillus amyloliquefaciens subsp. plantarum).